The primary structure comprises 450 residues: Tubulin alpha chain (450 aa).

Q11 contributes to the GTP binding site. An N6-acetyllysine modification is found at K40. Residues E71, S140, G144, T145, T179, N206, and N228 each contribute to the GTP site. A Mg(2+)-binding site is contributed by E71. Residue E254 is part of the active site.

The protein belongs to the tubulin family. Dimer of alpha and beta chains. A typical microtubule is a hollow water-filled tube with an outer diameter of 25 nm and an inner diameter of 15 nM. Alpha-beta heterodimers associate head-to-tail to form protofilaments running lengthwise along the microtubule wall with the beta-tubulin subunit facing the microtubule plus end conferring a structural polarity. Microtubules usually have 13 protofilaments but different protofilament numbers can be found in some organisms and specialized cells. Mg(2+) is required as a cofactor. Post-translationally, acetylation of alpha chains at Lys-40 stabilizes microtubules and affects affinity and processivity of microtubule motors. This modification has a role in multiple cellular functions, ranging from cell motility, cell cycle progression or cell differentiation to intracellular trafficking and signaling.

It localises to the cytoplasm. The protein resides in the cytoskeleton. It carries out the reaction GTP + H2O = GDP + phosphate + H(+). In terms of biological role, tubulin is the major constituent of microtubules, a cylinder consisting of laterally associated linear protofilaments composed of alpha- and beta-tubulin heterodimers. Microtubules grow by the addition of GTP-tubulin dimers to the microtubule end, where a stabilizing cap forms. Below the cap, tubulin dimers are in GDP-bound state, owing to GTPase activity of alpha-tubulin. In Oxytricha granulifera (Ciliate), this protein is Tubulin alpha chain.